A 501-amino-acid polypeptide reads, in one-letter code: DNA nucleotidylexotransferase (501 aa).

A Nuclear localization signal motif is present at residues 11 to 17 (KKRKRPV). The BRCT domain maps to 24-121 (QVEVKFKEVT…RPVRVETRHS (98 aa)). The segment at 249-253 (VGPKT) is involved in DNA binding. Residues 324-329 (GFRRGK) and 333-336 (HDVD) each bind a 2'-deoxyribonucleoside 5'-triphosphate. Mg(2+)-binding residues include Asp-334, Asp-336, and Asp-426. 441–442 (GW) contacts a 2'-deoxyribonucleoside 5'-triphosphate.

The protein belongs to the DNA polymerase type-X family. It depends on Mg(2+) as a cofactor.

The protein localises to the nucleus. The enzyme catalyses DNA(n) + a 2'-deoxyribonucleoside 5'-triphosphate = DNA(n+1) + diphosphate. Functionally, template-independent DNA polymerase which catalyzes the random addition of deoxynucleoside 5'-triphosphate to the 3'-end of a DNA initiator. One of the in vivo functions of this enzyme is the addition of nucleotides at the junction (N region) of rearranged Ig heavy chain and T-cell receptor gene segments during the maturation of B- and T-cells. This chain is DNA nucleotidylexotransferase (dntt), found in Oncorhynchus mykiss (Rainbow trout).